A 24-amino-acid chain; its full sequence is M-poneritoxin-Ng1e (24 aa).

In terms of tissue distribution, expressed by the venom gland.

The protein resides in the secreted. Its subcellular location is the target cell membrane. Its function is as follows. Has a broad spectrum of activity against both Gram-positive and Gram-negative bacteria and S.cerevisiae. Has insecticidal and hemolytic activities. May act by disrupting the integrity of the bacterial cell membrane. The polypeptide is M-poneritoxin-Ng1e (Neoponera goeldii (Ponerine ant)).